Consider the following 755-residue polypeptide: SWI/SNF-related matrix-associated actin-dependent regulator of chromatin subfamily A-like protein 1 (755 aa).

Residues 7 to 27 (SEIAEKKRIALAKLQAKKSQL) are a coiled coil. 2 disordered regions span residues 26 to 91 (QLLA…NKSS) and 104 to 134 (SNRELSRGAAHPYQRPNGGNERNKPTLSLSS). Residues 32–63 (PATNGKSTTSATGATQHANNGKSNPNQPQAKS) show a composition bias toward polar residues. At serine 63 the chain carries Phosphoserine. Residues 139 to 217 (PVAVLLGNSI…KPYVHMNGIP (79 aa)) form the HARP domain. The Helicase ATP-binding domain occupies 256 to 412 (CFAIAQKGRI…FTQLQMIDGK (157 aa)). 269–276 (DEMGLGKT) serves as a coordination point for ATP. The DESH box signature appears at 361–364 (DESH). The 155-residue stretch at 527-681 (YLKTLVKEQK…NLQKATHTAA (155 aa)) folds into the Helicase C-terminal domain.

This sequence belongs to the SNF2/RAD54 helicase family. SMARCAL1 subfamily.

The protein localises to the nucleus. Functionally, ATP-dependent annealing helicase that catalyzes the rewinding of the stably unwound DNA. The chain is SWI/SNF-related matrix-associated actin-dependent regulator of chromatin subfamily A-like protein 1 (Marcal1) from Drosophila melanogaster (Fruit fly).